The chain runs to 306 residues: Dihydroorotate dehydrogenase B (NAD(+)), catalytic subunit (306 aa).

FMN is bound by residues Ser-22 and 46–47; that span reads KG. Substrate contacts are provided by residues Lys-46 and 70–74; that span reads NAIGL. FMN-binding residues include Asn-100 and Asn-128. Position 128 (Asn-128) interacts with substrate. Cys-131 functions as the Nucleophile in the catalytic mechanism. FMN is bound by residues Lys-167 and Ile-193. A substrate-binding site is contributed by 194–195; sequence NT. Residues Gly-219, 245–246, and 267–268 each bind FMN; these read GG and GT.

This sequence belongs to the dihydroorotate dehydrogenase family. Type 1 subfamily. In terms of assembly, heterotetramer of 2 PyrK and 2 PyrD type B subunits. The cofactor is FMN.

It localises to the cytoplasm. It catalyses the reaction (S)-dihydroorotate + NAD(+) = orotate + NADH + H(+). It functions in the pathway pyrimidine metabolism; UMP biosynthesis via de novo pathway; orotate from (S)-dihydroorotate (NAD(+) route): step 1/1. Functionally, catalyzes the conversion of dihydroorotate to orotate with NAD(+) as electron acceptor. This Solidesulfovibrio magneticus (strain ATCC 700980 / DSM 13731 / RS-1) (Desulfovibrio magneticus) protein is Dihydroorotate dehydrogenase B (NAD(+)), catalytic subunit (pyrD).